A 931-amino-acid polypeptide reads, in one-letter code: Ribosome-releasing factor 2, mitochondrial (931 aa).

Residues 63–379 enclose the tr-type G domain; the sequence is EKTRNIGIIA…AVNNLLPGPS (317 aa). GTP contacts are provided by residues 72-79, 162-166, and 216-219; these read AHIDAGKT, DTPGH, and NKLD.

Belongs to the TRAFAC class translation factor GTPase superfamily. Classic translation factor GTPase family. EF-G/EF-2 subfamily.

Its subcellular location is the mitochondrion. Its function is as follows. Mitochondrial GTPase that mediates the disassembly of ribosomes from messenger RNA at the termination of mitochondrial protein biosynthesis. Not involved in the GTP-dependent ribosomal translocation step during translation elongation. The polypeptide is Ribosome-releasing factor 2, mitochondrial (mef2) (Talaromyces stipitatus (strain ATCC 10500 / CBS 375.48 / QM 6759 / NRRL 1006) (Penicillium stipitatum)).